Consider the following 295-residue polypeptide: Pyridoxal 5'-phosphate synthase subunit PdxS (295 aa).

Aspartate 23 contributes to the D-ribose 5-phosphate binding site. Lysine 80 functions as the Schiff-base intermediate with D-ribose 5-phosphate in the catalytic mechanism. Glycine 152 is a D-ribose 5-phosphate binding site. Position 164 (arginine 164) interacts with D-glyceraldehyde 3-phosphate. Residues glycine 213 and 234 to 235 (GS) each bind D-ribose 5-phosphate.

Belongs to the PdxS/SNZ family. In the presence of PdxT, forms a dodecamer of heterodimers.

The enzyme catalyses aldehydo-D-ribose 5-phosphate + D-glyceraldehyde 3-phosphate + L-glutamine = pyridoxal 5'-phosphate + L-glutamate + phosphate + 3 H2O + H(+). It functions in the pathway cofactor biosynthesis; pyridoxal 5'-phosphate biosynthesis. Catalyzes the formation of pyridoxal 5'-phosphate from ribose 5-phosphate (RBP), glyceraldehyde 3-phosphate (G3P) and ammonia. The ammonia is provided by the PdxT subunit. Can also use ribulose 5-phosphate and dihydroxyacetone phosphate as substrates, resulting from enzyme-catalyzed isomerization of RBP and G3P, respectively. The polypeptide is Pyridoxal 5'-phosphate synthase subunit PdxS (Methanopyrus kandleri (strain AV19 / DSM 6324 / JCM 9639 / NBRC 100938)).